The primary structure comprises 1054 residues: Carbamoyl phosphate synthase large chain (1054 aa).

The tract at residues 1-402 (MPRRDDIRSI…SLLKAMASLE (402 aa)) is carboxyphosphate synthetic domain. Arg129, Arg169, Gly175, Gly176, Arg208, Val210, Glu215, Gly241, Val242, His243, Gln285, and Glu299 together coordinate ATP. The ATP-grasp 1 domain occupies 133-328 (REAMERIGLR…IAKIAARLAV (196 aa)). Residues Gln285, Glu299, and Asn301 each contribute to the Mg(2+) site. Residues Gln285, Glu299, and Asn301 each contribute to the Mn(2+) site. The interval 403 to 531 (IETRDIQARL…YYYSTYEQED (129 aa)) is oligomerization domain. Residues 532-914 (EVERGENPSV…AFAKALAAAG (383 aa)) are carbamoyl phosphate synthetic domain. Positions 658–849 (GRLLRELGIP…LARLATRVLL (192 aa)) constitute an ATP-grasp 2 domain. The ATP site is built by Arg694, Lys733, Glu740, Gly765, Val766, His767, Ser768, Gln808, and Glu820. Positions 808, 820, and 822 each coordinate Mg(2+). Residues Gln808, Glu820, and Asn822 each contribute to the Mn(2+) site. Positions 915–1054 (QRLPESGRVY…SLQDLYAART (140 aa)) constitute an MGS-like domain. The segment at 915-1054 (QRLPESGRVY…SLQDLYAART (140 aa)) is allosteric domain.

This sequence belongs to the CarB family. As to quaternary structure, composed of two chains; the small (or glutamine) chain promotes the hydrolysis of glutamine to ammonia, which is used by the large (or ammonia) chain to synthesize carbamoyl phosphate. Tetramer of heterodimers (alpha,beta)4. Requires Mg(2+) as cofactor. The cofactor is Mn(2+).

It catalyses the reaction hydrogencarbonate + L-glutamine + 2 ATP + H2O = carbamoyl phosphate + L-glutamate + 2 ADP + phosphate + 2 H(+). It carries out the reaction hydrogencarbonate + NH4(+) + 2 ATP = carbamoyl phosphate + 2 ADP + phosphate + 2 H(+). Its pathway is amino-acid biosynthesis; L-arginine biosynthesis; carbamoyl phosphate from bicarbonate: step 1/1. It participates in pyrimidine metabolism; UMP biosynthesis via de novo pathway; (S)-dihydroorotate from bicarbonate: step 1/3. Large subunit of the glutamine-dependent carbamoyl phosphate synthetase (CPSase). CPSase catalyzes the formation of carbamoyl phosphate from the ammonia moiety of glutamine, carbonate, and phosphate donated by ATP, constituting the first step of 2 biosynthetic pathways, one leading to arginine and/or urea and the other to pyrimidine nucleotides. The large subunit (synthetase) binds the substrates ammonia (free or transferred from glutamine from the small subunit), hydrogencarbonate and ATP and carries out an ATP-coupled ligase reaction, activating hydrogencarbonate by forming carboxy phosphate which reacts with ammonia to form carbamoyl phosphate. This is Carbamoyl phosphate synthase large chain from Rubrobacter xylanophilus (strain DSM 9941 / JCM 11954 / NBRC 16129 / PRD-1).